We begin with the raw amino-acid sequence, 293 residues long: Pyridoxal 5'-phosphate synthase subunit PdxS (293 aa).

A D-ribose 5-phosphate-binding site is contributed by aspartate 23. Lysine 80 functions as the Schiff-base intermediate with D-ribose 5-phosphate in the catalytic mechanism. Glycine 152 is a D-ribose 5-phosphate binding site. Arginine 164 serves as a coordination point for D-glyceraldehyde 3-phosphate. Residues glycine 213 and 234–235 (GS) contribute to the D-ribose 5-phosphate site.

Belongs to the PdxS/SNZ family. In the presence of PdxT, forms a dodecamer of heterodimers.

The enzyme catalyses aldehydo-D-ribose 5-phosphate + D-glyceraldehyde 3-phosphate + L-glutamine = pyridoxal 5'-phosphate + L-glutamate + phosphate + 3 H2O + H(+). It functions in the pathway cofactor biosynthesis; pyridoxal 5'-phosphate biosynthesis. Its function is as follows. Catalyzes the formation of pyridoxal 5'-phosphate from ribose 5-phosphate (RBP), glyceraldehyde 3-phosphate (G3P) and ammonia. The ammonia is provided by the PdxT subunit. Can also use ribulose 5-phosphate and dihydroxyacetone phosphate as substrates, resulting from enzyme-catalyzed isomerization of RBP and G3P, respectively. The sequence is that of Pyridoxal 5'-phosphate synthase subunit PdxS from Dehalococcoides mccartyi (strain ATCC BAA-2100 / JCM 16839 / KCTC 5957 / BAV1).